The following is a 224-amino-acid chain: Probable C-&gt;U-editing enzyme APOBEC-2 (224 aa).

Residues 1-25 (MAQKEEAAAAAEPASQNGEEVENLE) form a disordered region. Residues glutamate 60 and histidine 98 each coordinate Zn(2+). The CMP/dCMP-type deaminase domain maps to 64 to 169 (GRNKTFLCYV…PEIQAALRKL (106 aa)). The Proton donor role is filled by glutamate 100. Residues cysteine 128 and cysteine 131 each contribute to the Zn(2+) site.

The protein belongs to the cytidine and deoxycytidylate deaminase family. As to quaternary structure, homotetramer. Requires Zn(2+) as cofactor.

The catalysed reaction is cytidine(6666) in apoB mRNA + H2O + H(+) = uridine(6666) in apoB mRNA + NH4(+). Probable C to U editing enzyme whose physiological substrate is not yet known. Does not display detectable apoB mRNA editing. Has a low intrinsic cytidine deaminase activity. May play a role in the epigenetic regulation of gene expression through the process of active DNA demethylation. The sequence is that of Probable C-&gt;U-editing enzyme APOBEC-2 (APOBEC2) from Bos taurus (Bovine).